Here is a 978-residue protein sequence, read N- to C-terminus: Copper-transporting ATPase HMA4 (978 aa).

Positions Met-1 to Asp-11 are enriched in basic and acidic residues. Positions Met-1–Lys-35 are disordered. HMA domains lie at Arg-37–Asp-103, Ala-111–Asp-177, and Asn-186–Lys-252. Residues Cys-48, Cys-51, Cys-122, and Cys-125 each contribute to the Cu(+) site. Helical transmembrane passes span Phe-280–Ile-300, Met-315–Trp-335, Met-352–Leu-372, Phe-385–Val-405, Phe-545–Gly-565, Leu-584–Ala-604, Val-907–Phe-927, and Trp-935–Leu-955.

Belongs to the cation transport ATPase (P-type) (TC 3.A.3) family. Type IB subfamily. Highly expressed in roots. Expressed in vascular tissues of the stele, mainly in pericycle cells.

The protein localises to the vacuole membrane. The enzyme catalyses Cu(+)(in) + ATP + H2O = Cu(+)(out) + ADP + phosphate + H(+). Copper (Cu) transporter that mediates Cu transport in root vacuoles. Involved in Cu detoxification by sequestrating Cu into root vacuoles and limiting translocation of Cu from the roots to the shoots, and accumulation in grains. This Oryza sativa subsp. japonica (Rice) protein is Copper-transporting ATPase HMA4.